A 398-amino-acid chain; its full sequence is 1-aminocyclopropane-1-carboxylate oxidase homolog 5 (398 aa).

The region spanning 247 to 347 (KSHIMFGQYY…RISMPCFVST (101 aa)) is the Fe2OG dioxygenase domain. Positions 271, 273, and 327 each coordinate Fe cation. Position 338 (arginine 338) interacts with 2-oxoglutarate.

The protein belongs to the iron/ascorbate-dependent oxidoreductase family. Fe(2+) serves as cofactor. As to expression, expressed in etiolated seedlings, leaves, stems and flowers.

The chain is 1-aminocyclopropane-1-carboxylate oxidase homolog 5 (2A6) from Arabidopsis thaliana (Mouse-ear cress).